The following is a 189-amino-acid chain: Transcription factor E (189 aa).

An HTH TFE/IIEalpha-type domain is found at 9 to 101 (AVKSLEIYVR…FWRIDSDTIN (93 aa)).

Belongs to the TFE family. In terms of assembly, monomer. Interaction with RNA polymerase subunits RpoF and RpoE is necessary for Tfe stimulatory transcription activity. Able to interact with Tbp and RNA polymerase in the absence of DNA promoter. Interacts both with the preinitiation and elongation complexes.

Transcription factor that plays a role in the activation of archaeal genes transcribed by RNA polymerase. Facilitates transcription initiation by enhancing TATA-box recognition by TATA-box-binding protein (Tbp), and transcription factor B (Tfb) and RNA polymerase recruitment. Not absolutely required for transcription in vitro, but particularly important in cases where Tbp or Tfb function is not optimal. It dynamically alters the nucleic acid-binding properties of RNA polymerases by stabilizing the initiation complex and destabilizing elongation complexes. Seems to translocate with the RNA polymerase following initiation and acts by binding to the non template strand of the transcription bubble in elongation complexes. This chain is Transcription factor E, found in Aeropyrum pernix (strain ATCC 700893 / DSM 11879 / JCM 9820 / NBRC 100138 / K1).